The sequence spans 503 residues: 4-trimethylaminobutyraldehyde dehydrogenase (503 aa).

NAD(+)-binding positions include K189 and G241 to T245. E263 acts as the Proton acceptor in catalysis. C297 (nucleophile) is an active-site residue. An NAD(+)-binding site is contributed by E400.

Belongs to the aldehyde dehydrogenase family. Homotetramer.

It localises to the cytoplasm. The protein localises to the cytosol. The catalysed reaction is 4-(trimethylamino)butanal + NAD(+) + H2O = 4-(trimethylamino)butanoate + NADH + 2 H(+). It carries out the reaction an aldehyde + NAD(+) + H2O = a carboxylate + NADH + 2 H(+). Its pathway is amine and polyamine biosynthesis; carnitine biosynthesis. Functionally, converts gamma-trimethylaminobutyraldehyde into gamma-butyrobetaine with high efficiency (in vitro). Can catalyze the irreversible oxidation of a broad range of aldehydes to the corresponding acids in an NAD-dependent reaction, but with low efficiency. This is 4-trimethylaminobutyraldehyde dehydrogenase (aldh9A1) from Gadus morhua subsp. callarias (Baltic cod).